The chain runs to 186 residues: Elongation factor P (186 aa).

It belongs to the elongation factor P family.

The protein localises to the cytoplasm. It functions in the pathway protein biosynthesis; polypeptide chain elongation. Functionally, involved in peptide bond synthesis. Stimulates efficient translation and peptide-bond synthesis on native or reconstituted 70S ribosomes in vitro. Probably functions indirectly by altering the affinity of the ribosome for aminoacyl-tRNA, thus increasing their reactivity as acceptors for peptidyl transferase. This Cupriavidus necator (strain ATCC 17699 / DSM 428 / KCTC 22496 / NCIMB 10442 / H16 / Stanier 337) (Ralstonia eutropha) protein is Elongation factor P.